Reading from the N-terminus, the 106-residue chain is Large ribosomal subunit protein eL42 (106 aa).

It belongs to the eukaryotic ribosomal protein eL42 family.

The sequence is that of Large ribosomal subunit protein eL42 (RPL44) from Kluyveromyces lactis (strain ATCC 8585 / CBS 2359 / DSM 70799 / NBRC 1267 / NRRL Y-1140 / WM37) (Yeast).